The primary structure comprises 542 residues: MAAKEVKFHSDARERMLRGVDVLANAVKVTLGPKGRNVVIDKSFGAPRITKDGVSVAKEIELEDKFENMGAQMLREVASKTNDLAGDGTTTATVLAQAIVKEGAKAVASGMNPMDLKRGIDLAVDAVVGELKANARKISNNSEIAQVGTISANGDAEIGRYLAEAMEKVGNEGVITVEEAKTAETELEVVEGMQFDRGYLSPYFVTNQDKMRVELEDPYILIHEKKLSNLQSMLPVLEAVVQSGKPLLIIAEDVEGEALATLVVNKLRGGLKIAAVKAPGFGDRRKAMLEDIAILTAGTVISEDLGIKLENVTLNMLGRAKKVAIEKENTTIIDGAGSKAELDGRTAQIRAQIEETTSDYDREKLQERLAKLAGGVAVIRVGGSTEVEVKEKKDRVDDALHATRAAVEEGILPGGGVALLRAVKALDSIKTANDDQRVGVDIVRRAIEAPVRQIAENAGAEGSIIVGKLREKSDFSYGWNAQTGEYGDLYAQGVIDPAKVVRTALQDAASVAGLLVTTEAMIAEKPKKEAAPAMPAGAGMDF.

Residues 30-33 (TLGP), K51, 87-91 (DGTTT), G415, and D496 contribute to the ATP site.

It belongs to the chaperonin (HSP60) family. Forms a cylinder of 14 subunits composed of two heptameric rings stacked back-to-back. Interacts with the co-chaperonin GroES.

The protein resides in the cytoplasm. The enzyme catalyses ATP + H2O + a folded polypeptide = ADP + phosphate + an unfolded polypeptide.. In terms of biological role, together with its co-chaperonin GroES, plays an essential role in assisting protein folding. The GroEL-GroES system forms a nano-cage that allows encapsulation of the non-native substrate proteins and provides a physical environment optimized to promote and accelerate protein folding. The sequence is that of Chaperonin GroEL 2 from Rhizobium etli (strain ATCC 51251 / DSM 11541 / JCM 21823 / NBRC 15573 / CFN 42).